The sequence spans 499 residues: Bifunctional purine biosynthesis protein PurH (499 aa).

One can recognise an MGS-like domain in the interval 1 to 144 (MIKRALISVF…KNFKDVVVLT (144 aa)).

Belongs to the PurH family.

The catalysed reaction is (6R)-10-formyltetrahydrofolate + 5-amino-1-(5-phospho-beta-D-ribosyl)imidazole-4-carboxamide = 5-formamido-1-(5-phospho-D-ribosyl)imidazole-4-carboxamide + (6S)-5,6,7,8-tetrahydrofolate. It catalyses the reaction IMP + H2O = 5-formamido-1-(5-phospho-D-ribosyl)imidazole-4-carboxamide. Its pathway is purine metabolism; IMP biosynthesis via de novo pathway; 5-formamido-1-(5-phospho-D-ribosyl)imidazole-4-carboxamide from 5-amino-1-(5-phospho-D-ribosyl)imidazole-4-carboxamide (10-formyl THF route): step 1/1. It participates in purine metabolism; IMP biosynthesis via de novo pathway; IMP from 5-formamido-1-(5-phospho-D-ribosyl)imidazole-4-carboxamide: step 1/1. This Clostridium botulinum (strain Kyoto / Type A2) protein is Bifunctional purine biosynthesis protein PurH.